Here is a 249-residue protein sequence, read N- to C-terminus: 3-deoxy-manno-octulosonate cytidylyltransferase (249 aa).

It belongs to the KdsB family.

It is found in the cytoplasm. The catalysed reaction is 3-deoxy-alpha-D-manno-oct-2-ulosonate + CTP = CMP-3-deoxy-beta-D-manno-octulosonate + diphosphate. Its pathway is nucleotide-sugar biosynthesis; CMP-3-deoxy-D-manno-octulosonate biosynthesis; CMP-3-deoxy-D-manno-octulosonate from 3-deoxy-D-manno-octulosonate and CTP: step 1/1. It functions in the pathway bacterial outer membrane biogenesis; lipopolysaccharide biosynthesis. Its function is as follows. Activates KDO (a required 8-carbon sugar) for incorporation into bacterial lipopolysaccharide in Gram-negative bacteria. The polypeptide is 3-deoxy-manno-octulosonate cytidylyltransferase (Brucella anthropi (strain ATCC 49188 / DSM 6882 / CCUG 24695 / JCM 21032 / LMG 3331 / NBRC 15819 / NCTC 12168 / Alc 37) (Ochrobactrum anthropi)).